Here is a 574-residue protein sequence, read N- to C-terminus: Membrane protein insertase YidC (574 aa).

A helical transmembrane segment spans residues 6–26; that stretch reads VFLIFAWLMVAALLWMEWGKD. Positions 45-77 are disordered; that stretch reads RDPDAAAPSAANVPSAQPIPQAGAPGTVPATSS. 5 helical membrane passes run 356–376, 380–400, 447–467, 489–509, and 525–545; these read FSIM…LHSF, WGWA…PLSA, GGCL…WVLV, PYFI…KLTP, and PLVF…YWVV.

It belongs to the OXA1/ALB3/YidC family. Type 1 subfamily. In terms of assembly, interacts with the Sec translocase complex via SecD. Specifically interacts with transmembrane segments of nascent integral membrane proteins during membrane integration.

The protein resides in the cell inner membrane. Its function is as follows. Required for the insertion and/or proper folding and/or complex formation of integral membrane proteins into the membrane. Involved in integration of membrane proteins that insert both dependently and independently of the Sec translocase complex, as well as at least some lipoproteins. Aids folding of multispanning membrane proteins. The polypeptide is Membrane protein insertase YidC (Xanthomonas euvesicatoria pv. vesicatoria (strain 85-10) (Xanthomonas campestris pv. vesicatoria)).